A 738-amino-acid chain; its full sequence is Glucan 1,4-alpha-glucosidase SusB (738 aa).

The N-terminal stretch at 1 to 21 is a signal peptide; sequence MKKRKILSLIAFLCISFIANA. Position 194 (Glu-194) interacts with Ca(2+). Residues 215 to 217, 437 to 439, and 507 to 508 contribute to the substrate site; these read PNS, HHE, and HE. The Ca(2+) site is built by Glu-508, Glu-526, and Glu-532. The Proton donor/acceptor role is filled by Glu-532.

It belongs to the glycosyl hydrolase 97 family. As to quaternary structure, monomer. The cofactor is Ca(2+).

Its subcellular location is the periplasm. The enzyme catalyses Hydrolysis of terminal (1-&gt;4)-linked alpha-D-glucose residues successively from non-reducing ends of the chains with release of beta-D-glucose.. Its pathway is glycan degradation; starch degradation. Glucoamylase that hydrolyzes alpha-1,4-glucosidic linkages, alpha-1,6-, alpha-1,3- and alpha-1,2-glucosidic linkages during starch degradation. In Bacteroides thetaiotaomicron (strain ATCC 29148 / DSM 2079 / JCM 5827 / CCUG 10774 / NCTC 10582 / VPI-5482 / E50), this protein is Glucan 1,4-alpha-glucosidase SusB (susB).